Here is a 209-residue protein sequence, read N- to C-terminus: Kinetochore protein Spc25 (209 aa).

The stretch at T74 to D107 forms a coiled coil.

This sequence belongs to the SPC25 family. In terms of assembly, component of the Ndc80 complex, which is composed of Ndc80, Nuf2 and Spc25.

The protein localises to the nucleus. It localises to the chromosome. The protein resides in the centromere. It is found in the kinetochore. Its function is as follows. Acts as a component of the essential kinetochore-associated Ndc80 complex, which is required for chromosome segregation and spindle checkpoint activity during meiosis and mitosis. Required for kinetochore integrity and the organization of stable microtubule binding sites in the outer plate of the kinetochore. Participates in SAC signaling that responds specifically to disruptions in spindle microtubule dynamics. The NDC80 complex synergistically enhances the affinity of the SKA1 complex for microtubules and may allow the NDC80 complex to track depolymerizing microtubules. This chain is Kinetochore protein Spc25, found in Drosophila grimshawi (Hawaiian fruit fly).